The sequence spans 160 residues: Biogenesis of lysosome-related organelles complex 1 subunit 5 (160 aa).

It belongs to the BLOC1S5 family. In terms of assembly, component of the biogenesis of lysosome-related organelles complex-1 (BLOC-1) composed of Blos1, Blos2, Blos3, Blos4, Dysb, Muted, Pldn and Snapin.

Component of the biogenesis of lysosome-related organelles complex-1 (BLOC-1) involved in pigment granule biogenesis. This Drosophila melanogaster (Fruit fly) protein is Biogenesis of lysosome-related organelles complex 1 subunit 5.